Consider the following 434-residue polypeptide: ATP-dependent protease ATPase subunit HslU (434 aa).

ATP contacts are provided by residues V18, 60–65 (GVGKTE), D247, E312, and R384.

The protein belongs to the ClpX chaperone family. HslU subfamily. A double ring-shaped homohexamer of HslV is capped on each side by a ring-shaped HslU homohexamer. The assembly of the HslU/HslV complex is dependent on binding of ATP.

Its subcellular location is the cytoplasm. Functionally, ATPase subunit of a proteasome-like degradation complex; this subunit has chaperone activity. The binding of ATP and its subsequent hydrolysis by HslU are essential for unfolding of protein substrates subsequently hydrolyzed by HslV. HslU recognizes the N-terminal part of its protein substrates and unfolds these before they are guided to HslV for hydrolysis. The protein is ATP-dependent protease ATPase subunit HslU of Bradyrhizobium sp. (strain BTAi1 / ATCC BAA-1182).